The chain runs to 152 residues: MVMMLRTWRLLPMVLLAAYCYCVFGTCSIGTTTAPVEWKSPDRQIPKNITCANYSGTINGNVTFRGLQNKTEDFLHWLLGWGHKSICSFFPKLQGNYNEQHYRYEVANLTYNCTYNRLTLLNLTTENSGKYYFKREDANFTFYYSCYNLTVS.

The signal sequence occupies residues 1–25 (MVMMLRTWRLLPMVLLAAYCYCVFG). 9 N-linked (GlcNAc...) asparagine; by host glycosylation sites follow: asparagine 48, asparagine 53, asparagine 61, asparagine 69, asparagine 108, asparagine 112, asparagine 122, asparagine 139, and asparagine 148.

The protein belongs to the RL11 family. N-glycosylated and possibly O-glycosylated.

The protein resides in the virion membrane. The polypeptide is Early glycoprotein GP48 (UL4) (Homo sapiens (Human)).